The following is a 509-amino-acid chain: MWVLLGVFLLTLAYLFWPKTKHSAAKYPRSLPSLPLVGSLLFLPRRGQQHENFFKLQEKYGPIYSFRLGSKTTVMIGHHQLAREVLLKKGKEFSGRPKVATLDILSDNQKGIAFADHGAHWQLHRKLVLNAFALFKDGNLKLEKIINQEANVLCDFLATQHGQSIDLSEPLSLAVTNIISFICFNFSFKNEDPALKAIQNVNDGILEVLSKEILLDIFPALKIFPSKAMEKMKGCVETRNELLNEILEKCQENFTSDSITNLLHILMQAKVNADNNNAGPDQDSKLLSNRHMLATIADIFGAGVETTTSVIKWIVAYLLHHPSLKKRIQDSIDQNIGFNRTPTISDRNCLVLLEATIREVLRIRPVAPMLIPHKAIIDSSIGDLTIDKGTDVVVNLWALHHNEKEWQQPDLFMPERFLDPTGTQLISPSLSYLPFGAGPRSCVGEMLARQELFLFMSRLLQRFNLEIPDDGKLPSLEGNPSLVLQIKPFKVKIEVRQAWKEAQAEGSTS.

Asn-202 lines the substrate pocket. Cys-442 lines the heme pocket.

This sequence belongs to the cytochrome P450 family. It depends on heme as a cofactor.

It localises to the endoplasmic reticulum membrane. It is found in the microsome membrane. It carries out the reaction a C21-steroid + reduced [NADPH--hemoprotein reductase] + O2 = a 17alpha-hydroxy-C21-steroid + oxidized [NADPH--hemoprotein reductase] + H2O + H(+). It catalyses the reaction progesterone + reduced [NADPH--hemoprotein reductase] + O2 = 17alpha-hydroxyprogesterone + oxidized [NADPH--hemoprotein reductase] + H2O + H(+). The enzyme catalyses pregnenolone + reduced [NADPH--hemoprotein reductase] + O2 = 17alpha-hydroxypregnenolone + oxidized [NADPH--hemoprotein reductase] + H2O + H(+). The catalysed reaction is 17alpha-hydroxyprogesterone + reduced [NADPH--hemoprotein reductase] + O2 = androst-4-ene-3,17-dione + acetate + oxidized [NADPH--hemoprotein reductase] + H2O + 2 H(+). It carries out the reaction 17alpha-hydroxyprogesterone + reduced [NADPH--hemoprotein reductase] + O2 = 16alpha,17alpha-dihydroxyprogesterone + oxidized [NADPH--hemoprotein reductase] + H2O + H(+). It catalyses the reaction 16alpha,17alpha-dihydroxyprogesterone + reduced [NADPH--hemoprotein reductase] + O2 = 6beta,16alpha,17alpha-trihydroxyprogesterone + oxidized [NADPH--hemoprotein reductase] + H2O + H(+). The enzyme catalyses 17alpha-hydroxypregnenolone + reduced [NADPH--hemoprotein reductase] + O2 = 3beta-hydroxyandrost-5-en-17-one + acetate + oxidized [NADPH--hemoprotein reductase] + H2O + 2 H(+). The catalysed reaction is 16alpha,17alpha-dihydroxypregnenolone + reduced [NADPH--hemoprotein reductase] + O2 = 3beta,16alpha-dihydroxy-androst-5-en-17-one + acetate + oxidized [NADPH--hemoprotein reductase] + H2O + 2 H(+). It carries out the reaction 3beta-hydroxyandrost-5-en-17-one + reduced [NADPH--hemoprotein reductase] + O2 = 3beta,16alpha-dihydroxy-androst-5-en-17-one + oxidized [NADPH--hemoprotein reductase] + H2O + H(+). It catalyses the reaction androst-4-ene-3,17-dione + reduced [NADPH--hemoprotein reductase] + O2 = 16alpha-hydroxyandrost-4-ene-3,17-dione + oxidized [NADPH--hemoprotein reductase] + H2O + H(+). Its pathway is steroid hormone biosynthesis. It participates in steroid biosynthesis; glucocorticoid biosynthesis. Regulated predominantly by intracellular cAMP levels. The 17,20-lyase activity is stimulated by cytochrome b5, which acts as an allosteric effector increasing the Vmax of the lyase activity. Functionally, a cytochrome P450 monooxygenase involved in corticoid and androgen biosynthesis. Catalyzes 17-alpha hydroxylation of C21 steroids, which is common for both pathways. A second oxidative step, required only for androgen synthesis, involves an acyl-carbon cleavage. The 17-alpha hydroxy intermediates, as part of adrenal glucocorticoids biosynthesis pathway, are precursors of cortisol. Hydroxylates steroid hormones, pregnenolone and progesterone to form 17-alpha hydroxy metabolites, followed by the cleavage of the C17-C20 bond to form C19 steroids, dehydroepiandrosterone (DHEA) and androstenedione. Has 16-alpha hydroxylase activity. Catalyzes 16-alpha hydroxylation of 17-alpha hydroxy pregnenolone, followed by the cleavage of the C17-C20 bond to form 16-alpha-hydroxy DHEA. Also 16-alpha hydroxylates androgens, relevant for estriol synthesis. Mechanistically, uses molecular oxygen inserting one oxygen atom into a substrate, and reducing the second into a water molecule, with two electrons provided by NADPH via cytochrome P450 reductase (CPR; NADPH-ferrihemoprotein reductase). The protein is Steroid 17-alpha-hydroxylase/17,20 lyase (CYP17A1) of Capra hircus (Goat).